A 529-amino-acid chain; its full sequence is Potassium voltage-gated channel subfamily A member 6 (529 aa).

Residues 1–33 (MRSEKSLTLAAPGEVRGPEGEQQDAGDFPEAGG) form a disordered region. Residues 1 to 171 (MRSEKSLTLA…LLFEYPESSG (171 aa)) are Cytoplasmic-facing. The residue at position 3 (serine 3) is a Phosphoserine. Residues 172–193 (PARGIAIVSVLVILISIVIFCL) form a helical membrane-spanning segment. Topologically, residues 194-262 (ETLPQFRVDG…TLGGSFFTDP (69 aa)) are extracellular. The span at 210-220 (GVSRVSPVSRG) shows a compositional bias: low complexity. The interval 210-233 (GVSRVSPVSRGSQEEEEDEDDSYT) is disordered. The chain crosses the membrane as a helical span at residues 263 to 284 (FFLVETLCIVWFTFELLVRFSA). The S-palmitoyl cysteine moiety is linked to residue cysteine 285. Topologically, residues 285-295 (CPSKPAFFRNI) are cytoplasmic. The helical transmembrane segment at 296-316 (MNIIDLVAIFPYFITLGTELV) threads the bilayer. At 317 to 337 (QQQEQQPASGGGGQNGQQAMS) the chain is on the extracellular side. The helical; Voltage-sensor transmembrane segment at 338 to 358 (LAILRVIRLVRVFRIFKLSRH) threads the bilayer. At 359 to 373 (SKGLQILGKTLQASM) the chain is on the cytoplasmic side. Residues 360–373 (KGLQILGKTLQASM) are S4-S5 linker. The helical transmembrane segment at 374-395 (RELGLLIFFLFIGVILFSSAVY) threads the bilayer. At 396 to 409 (FAEADDDDSLFPSI) the chain is on the extracellular side. The segment at residues 410–421 (PDAFWWAVVTMT) is an intramembrane region (helical). A Selectivity filter motif is present at residues 422–427 (TVGYGD). An intramembrane segment occupies 422-429 (TVGYGDMY). Residues 430 to 436 (PMTVGGK) are Extracellular-facing. A helical transmembrane segment spans residues 437–465 (IVGSLCAIAGVLTIALPVPVIVSNFNYFY). The Cytoplasmic portion of the chain corresponds to 466–529 (HRETEQEEQG…YAEKRMLTEV (64 aa)). Residues 488 to 513 (DLRATDNGLGKPDFPEANRERRPSYL) are disordered. Residues 500 to 510 (DFPEANRERRP) are compositionally biased toward basic and acidic residues. Serine 511 carries the phosphoserine; by PKA modification. The PDZ-binding signature appears at 527–529 (TEV).

It belongs to the potassium channel family. A (Shaker) (TC 1.A.1.2) subfamily. Kv1.6/KCNA6 sub-subfamily. As to quaternary structure, homotetramer and heterotetramer of potassium channel proteins. Interacts with KCNAB1 and KCNAB2.

It is found in the cell membrane. It carries out the reaction K(+)(in) = K(+)(out). Functionally, voltage-gated potassium channel that mediates transmembrane potassium transport in excitable membranes. Forms tetrameric potassium-selective channels through which potassium ions pass in accordance with their electrochemical gradient. The channel alternates between opened and closed conformations in response to the voltage difference across the membrane. Can form functional homotetrameric channels and heterotetrameric channels that contain variable proportions of KCNA1, KCNA2, KCNA4, KCNA6, and possibly other family members as well; channel properties depend on the type of alpha subunits that are part of the channel. Channel properties are modulated by cytoplasmic beta subunits that regulate the subcellular location of the alpha subunits and promote rapid inactivation. Homotetrameric channels display rapid activation and slow inactivation. In Homo sapiens (Human), this protein is Potassium voltage-gated channel subfamily A member 6 (KCNA6).